The sequence spans 113 residues: UPF0102 protein CHU_0465 (113 aa).

Belongs to the UPF0102 family.

In Cytophaga hutchinsonii (strain ATCC 33406 / DSM 1761 / CIP 103989 / NBRC 15051 / NCIMB 9469 / D465), this protein is UPF0102 protein CHU_0465.